The chain runs to 91 residues: uncharacterized protein (91 aa).

The segment at 71–91 (NRENNSRSSVKQIINQETEEE) is disordered. Polar residues predominate over residues 76 to 91 (SRSSVKQIINQETEEE).

This is an uncharacterized protein from Bacillus subtilis (strain 168).